A 190-amino-acid polypeptide reads, in one-letter code: Orotate phosphoribosyltransferase (190 aa).

A 5-phospho-alpha-D-ribose 1-diphosphate-binding site is contributed by 114-122 (EDVVTTGGS). Orotate-binding residues include threonine 118 and arginine 146.

This sequence belongs to the purine/pyrimidine phosphoribosyltransferase family. PyrE subfamily. As to quaternary structure, homodimer. The cofactor is Mg(2+).

It catalyses the reaction orotidine 5'-phosphate + diphosphate = orotate + 5-phospho-alpha-D-ribose 1-diphosphate. It participates in pyrimidine metabolism; UMP biosynthesis via de novo pathway; UMP from orotate: step 1/2. Catalyzes the transfer of a ribosyl phosphate group from 5-phosphoribose 1-diphosphate to orotate, leading to the formation of orotidine monophosphate (OMP). The polypeptide is Orotate phosphoribosyltransferase (Caldanaerobacter subterraneus subsp. tengcongensis (strain DSM 15242 / JCM 11007 / NBRC 100824 / MB4) (Thermoanaerobacter tengcongensis)).